Here is a 345-residue protein sequence, read N- to C-terminus: MDHIQLLNDKIDINLIHQLLIDQSCGACSVFLGTTRDNFEGKNVISLEYEAYENMALKEMGKICTDLRVRWPSLKHIVIYHRLGIVPVSEVSVVIAASAPHRVAALESVNFAIDQLKSRVPIWKKEVYEKDLIGEWKANVECPWPQYSKTSLRTFEFFSCKIDQKTENIPDKLVQIRVDDSELNRRVKCFLKRKRDEINLYNIHDFKQLSTNTELADSSESEVKYSCARTQSSLVKQQQSKSHLKVRREIDNSGPHVRPNYSSQLNKLTTAQHYKNDSFENSMLRNSRLRNIEEYMCVTSDGDNILNRIKNIENKILLLESISPEYKYFVSIFIIVYQMFILSNS.

Substrate is bound by residues 101-102 (HR), K117, and 124-126 (KKE).

This sequence belongs to the MoaE family. MOCS2B subfamily. In terms of assembly, heterotetramer; composed of 2 small (Mocs2A) and 2 large (Mocs2B) subunits.

The protein localises to the cytoplasm. It catalyses the reaction 2 [molybdopterin-synthase sulfur-carrier protein]-C-terminal-Gly-aminoethanethioate + cyclic pyranopterin phosphate + H2O = molybdopterin + 2 [molybdopterin-synthase sulfur-carrier protein]-C-terminal Gly-Gly + 2 H(+). It functions in the pathway cofactor biosynthesis; molybdopterin biosynthesis. Its function is as follows. Catalytic subunit of the molybdopterin synthase complex, a complex that catalyzes the conversion of precursor Z into molybdopterin. Acts by mediating the incorporation of 2 sulfur atoms from thiocarboxylated Mocs2A into precursor Z to generate a dithiolene group. This is Molybdopterin synthase catalytic subunit from Drosophila virilis (Fruit fly).